A 514-amino-acid polypeptide reads, in one-letter code: Intracellular exo-alpha-L-arabinofuranosidase (514 aa).

Glu47 and Asn194 together coordinate alpha-L-arabinofuranose. Glu195 functions as the Proton donor/acceptor in the catalytic mechanism. Tyr261, Glu317, and Gln366 together coordinate alpha-L-arabinofuranose. Catalysis depends on Glu317, which acts as the Nucleophile.

Belongs to the glycosyl hydrolase 51 family. As to quaternary structure, homohexamer; trimer of dimers.

Its subcellular location is the cytoplasm. The enzyme catalyses Hydrolysis of terminal non-reducing alpha-L-arabinofuranoside residues in alpha-L-arabinosides.. It participates in glycan metabolism; L-arabinan degradation. Involved in the degradation of arabinan and is a key enzyme in the complete degradation of the plant cell wall. Catalyzes the cleavage of terminal alpha-L-arabinofuranosyl residues in different hemicellulosic homopolysaccharides (branched and debranched arabinans) and heteropolysaccharides (arabinoxylans). The polypeptide is Intracellular exo-alpha-L-arabinofuranosidase (asdII) (Bacteroides ovatus).